The following is an 80-amino-acid chain: UPF0291 protein YlaC (80 aa).

This sequence belongs to the UPF0291 family.

The protein localises to the cytoplasm. This Lactococcus lactis subsp. lactis (strain IL1403) (Streptococcus lactis) protein is UPF0291 protein YlaC (ylcA).